Reading from the N-terminus, the 292-residue chain is MSQLSQQRILSGGSPFACKVCGKLFSHKSNLTEHEHFHSREKPFECNECGKAFSQKQYVIKHQSTHSGEKLFECSDCGKAFSQKENLLTHQKIHTGEKPFECKDCGKAFIQKSNLIRHQRTHTGEKPFICKECGKTFSGKSNLTEHEKIHIGEKPFKCNECGTAFGQKKYLIKHQNIHTGEKPYECNECGKAFSQRTSLIVHVRIHSGDKPYECNVCGKAFSQSSSLTVHVRSHTGEKPYGCNECGKAFSQFSTLALHLRIHTGKKPYQCSECGKAFSQKSHHIRHQKIHTH.

C2H2-type zinc fingers lie at residues 16–38, 44–66, 72–94, 100–122, 128–150, 156–178, 184–206, 212–234, 240–262, and 268–290; these read FACKVCGKLFSHKSNLTEHEHFH, FECNECGKAFSQKQYVIKHQSTH, FECSDCGKAFSQKENLLTHQKIH, FECKDCGKAFIQKSNLIRHQRTH, FICKECGKTFSGKSNLTEHEKIH, FKCNECGTAFGQKKYLIKHQNIH, YECNECGKAFSQRTSLIVHVRIH, YECNVCGKAFSQSSSLTVHVRSH, YGCNECGKAFSQFSTLALHLRIH, and YQCSECGKAFSQKSHHIRHQKIH. Residues K28, K51, and K56 each participate in a glycyl lysine isopeptide (Lys-Gly) (interchain with G-Cter in SUMO2) cross-link. Glycyl lysine isopeptide (Lys-Gly) (interchain with G-Cter in SUMO) cross-links involve residues K157 and K169. K173 is covalently cross-linked (Glycyl lysine isopeptide (Lys-Gly) (interchain with G-Cter in SUMO2)). The interaction with TERF2IP stretch occupies residues 212 to 292; the sequence is YECNVCGKAF…HIRHQKIHTH (81 aa).

This sequence belongs to the krueppel C2H2-type zinc-finger protein family. Binds DNA. Interacts with SUMO conjugating enzyme UBC9/UBE2I. Interacts with the telomeric protein TERF2IP. Expressed in heart, brain, liver, lung, skeletal muscle and kidney, and at much lower level in spleen and testicle. Expressed in lactating mammary gland.

The protein localises to the nucleus. The polypeptide is Zinc finger protein OZF (Znf146) (Mus musculus (Mouse)).